Reading from the N-terminus, the 395-residue chain is Zinc finger protein 385D (395 aa).

A Matrin-type 1 zinc finger spans residues 80-110; sequence ISCNICQLRFNSDSQAAAHYKGTKHAKKLKA. Polar residues predominate over residues 169–193; the sequence is MTTEITSKVEKSPTTATGNSSCPST. A disordered region spans residues 169 to 194; it reads MTTEITSKVEKSPTTATGNSSCPSTE. 2 consecutive Matrin-type zinc fingers follow at residues 204–234 and 267–297; these read LYCS…MLEA and FHCE…RAAG. A disordered region spans residues 282-309; it reads LKQHISSRRHKDRAAGKPPKPKYSPYNK.

The protein resides in the nucleus. In Homo sapiens (Human), this protein is Zinc finger protein 385D (ZNF385D).